The chain runs to 155 residues: Large ribosomal subunit protein eL19 (155 aa).

Residues 66–84 are compositionally biased toward basic residues; that stretch reads VRHLQRRKGRRRGMGRRKG. The disordered stretch occupies residues 66 to 85; that stretch reads VRHLQRRKGRRRGMGRRKGV.

It belongs to the eukaryotic ribosomal protein eL19 family. Part of the 50S ribosomal subunit.

In terms of biological role, binds to the 23S rRNA. This is Large ribosomal subunit protein eL19 from Aeropyrum pernix (strain ATCC 700893 / DSM 11879 / JCM 9820 / NBRC 100138 / K1).